Consider the following 90-residue polypeptide: U7-theraphotoxin-Hhn1b (90 aa).

The signal sequence occupies residues 1–19 (MKTAIFTVVLALAVFAVLS). Residues 20-50 (FGWEANEKALSEEFTELIHEKEAASETEARE) constitute a propeptide that is removed on maturation. Cystine bridges form between cysteine 51-cysteine 65, cysteine 58-cysteine 70, and cysteine 64-cysteine 81.

It belongs to the neurotoxin 10 (Hwtx-1) family. 13 (Hntx-13) subfamily. As to expression, expressed by the venom gland.

Its subcellular location is the secreted. In terms of biological role, ion channel inhibitor. This is U7-theraphotoxin-Hhn1b from Cyriopagopus hainanus (Chinese bird spider).